Reading from the N-terminus, the 492-residue chain is MCTEAEQPSPPAQQQEQGNPPLCKAQNPKPARLYRLVLLFVAGSLAAWTFHALSSTNLVWKLRQLHHLPTAHYLQTRDEFALYSVEELNAFKEFYDKSVSDSVGASYTEAEQTNIKEALGALRMAQDLYLAGKDDKAARLFEHALALAPRHPEVLLRYGEFLEHNQRNIVLADQYYFQALTISPSNSEALANRQRTADVVQSLDERRLESLDSKRDALSAIHESNGALRRAKKEAYFQHIYHSVGIEGNTMTLAQTRSILETRMAVDGKSIDEHNEILGMDLAMKYINASLVQKIDITIKDILELHRRVLGHVDPIEGGEFRRNQVYVGGHIPPGPGDLALLMQRFERWLNSEHSSTLHPVNYAALAHYKLVHIHPFVDGNGRTSRLLMNTLLMRAGYPPVIIPKQQRSKYYHFLKLANEGDIRPFVRFIADCTEKTLDLYLWATSDLPQQIPMLIQTESEAGERLAQMQSPNVAQRSSILEFYESGSGDIP.

The segment covering 1-17 (MCTEAEQPSPPAQQQEQ) has biased composition (low complexity). Residues 1 to 25 (MCTEAEQPSPPAQQQEQGNPPLCKA) are disordered. The helical transmembrane segment at 33 to 55 (LYRLVLLFVAGSLAAWTFHALSS) threads the bilayer. 2 TPR repeats span residues 118-151 (ALGA…APRH) and 152-186 (PEVL…SPSN). The Inhibitory (S/T)XXXE(G/N) motif signature appears at 243–248 (SVGIEG). ATP contacts are provided by residues E247 and 328–331 (VGGH). Positions 297 to 432 (ITIKDILELH…IRPFVRFIAD (136 aa)) constitute a Fido domain. The active site involves H375. ATP is bound by residues 379-386 (DGNGRTSR), 411-412 (YY), and N419.

Belongs to the fic family. Homodimer.

Its subcellular location is the membrane. It carries out the reaction L-tyrosyl-[protein] + ATP = O-(5'-adenylyl)-L-tyrosyl-[protein] + diphosphate. The enzyme catalyses L-threonyl-[protein] + ATP = 3-O-(5'-adenylyl)-L-threonyl-[protein] + diphosphate. It catalyses the reaction 3-O-(5'-adenylyl)-L-threonyl-[protein] + H2O = L-threonyl-[protein] + AMP + H(+). With respect to regulation, the side chain of Glu-247 determines which of the two opposing activities (AMPylase or de-AMPylase) will take place. In response to endoplasmic reticulum stress, mediates de-AMPylase activity. Adenylyltransferase activity is inhibited by the inhibitory helix present at the N-terminus: Glu-247 binds ATP and competes with ATP-binding at Arg-386, thereby preventing adenylyltransferase activity. In unstressed cells, disengagement of Glu-247 promotes adenylyltransferase activity. Activation dissociates ATP-binding from Glu-247, allowing ordered binding of the entire ATP moiety with the alpha-phosphate in an orientation that is productive for accepting an incoming target hydroxyl side chain. Its function is as follows. Protein that can both mediate the addition of adenosine 5'-monophosphate (AMP) to specific residues of target proteins (AMPylation), and the removal of the same modification from target proteins (de-AMPylation), depending on the context. The side chain of Glu-247 determines which of the two opposing activities (AMPylase or de-AMPylase) will take place. Acts as a key regulator of the unfolded protein response (UPR) by mediating AMPylation or de-AMPylation of Hsc70-3/BiP. In unstressed cells, acts as an adenylyltransferase by mediating AMPylation of Hsc70-3/BiP at 'Thr-518', thereby inactivating it. In response to endoplasmic reticulum stress, acts as a phosphodiesterase by mediating removal of ATP (de-AMPylation) from Hsc70-3/BiP at 'Thr-518', leading to restore HSPA5/BiP activity. The sequence is that of Protein adenylyltransferase Fic from Drosophila sechellia (Fruit fly).